A 254-amino-acid chain; its full sequence is Nickel import ATP-binding protein NikD (254 aa).

An ABC transporter domain is found at 2 to 241; sequence PQQIELRNIA…PKHAVTRSLV (240 aa). ATP is bound at residue 36 to 43; that stretch reads GGSGSGKS.

Belongs to the ABC transporter superfamily. Nickel importer (TC 3.A.1.5.3) family. The complex is composed of two ATP-binding proteins (NikD and NikE), two transmembrane proteins (NikB and NikC) and a solute-binding protein (NikA).

It is found in the cell inner membrane. It carries out the reaction Ni(2+)(out) + ATP + H2O = Ni(2+)(in) + ADP + phosphate + H(+). Functionally, part of the ABC transporter complex NikABCDE involved in nickel import. Responsible for energy coupling to the transport system. The sequence is that of Nickel import ATP-binding protein NikD from Escherichia coli O157:H7.